Here is a 306-residue protein sequence, read N- to C-terminus: Triplex capsid protein 2 (306 aa).

It belongs to the herpesviridae TRX2 protein family. As to quaternary structure, interacts with TRX1 and major capisd protein/MCP.

The protein resides in the virion. It is found in the host nucleus. In terms of biological role, structural component of the T=16 icosahedral capsid. The capsid is composed of pentamers and hexamers of major capsid protein/MCP, which are linked together by heterotrimers called triplexes. These triplexes are formed by a single molecule of triplex protein 1/TRX1 and two copies of triplex protein 2/TRX2. Additionally, TRX1 is required for efficient transport of TRX2 to the nucleus, which is the site of capsid assembly. In Human cytomegalovirus (strain AD169) (HHV-5), this protein is Triplex capsid protein 2.